Reading from the N-terminus, the 324-residue chain is Probable UDP-sugar transporter protein SLC35A4 (324 aa).

Over 1 to 18 the chain is Cytoplasmic; it reads MSVEDGGLPGLGGPGQAR. Residues 19–39 traverse the membrane as a helical segment; it reads WTLMLLLSTATYGAHAPLLAL. The Lumenal portion of the chain corresponds to 40–52; that stretch reads CHVDGRVPFRPSS. A helical membrane pass occupies residues 53–73; sequence AVLLTELTKLLLCALSLLVGW. The Cytoplasmic segment spans residues 74–85; that stretch reads QAWPPRTPPWRQ. The helical transmembrane segment at 86–106 threads the bilayer; the sequence is AAPFALSALLYGANNNLVIHL. Residues 107 to 140 lie on the Lumenal side of the membrane; sequence QHYMDPSTYQVLSNLKIGSTALFYCLCLRRRLSA. A helical transmembrane segment spans residues 141–161; that stretch reads RQGLALLLLMAAGACYAAGGL. Topologically, residues 162–177 are cytoplasmic; sequence RDPGSPLPESPSTAAS. A helical transmembrane segment spans residues 178 to 198; sequence GPVPLHVTAPGLLLLLLYCLI. Topologically, residues 199–214 are lumenal; sequence SGLSSVYTELLLKRQR. The helical transmembrane segment at 215 to 235 threads the bilayer; it reads LPLALQNLFLYTFGVLLNLGL. The Cytoplasmic portion of the chain corresponds to 236-248; the sequence is HAGGGPGPGLLEG. A helical membrane pass occupies residues 249-271; the sequence is FSGWAALVVLSQALNGLLMSAVM. Residues 272 to 279 are Lumenal-facing; sequence KHGSSITR. The helical transmembrane segment at 280–300 threads the bilayer; it reads LFVVSCSLVVNAVLSAALLRL. Residues 301–324 are Cytoplasmic-facing; sequence QLTAAFFLAALLIGLAVHLYYGSR.

The protein belongs to the nucleotide-sugar transporter family. SLC35A subfamily. Found in a complex with SLC35A2 and SLC35A3.

Its subcellular location is the golgi apparatus membrane. It carries out the reaction CDP-L-ribitol(in) + CDP(out) = CDP-L-ribitol(out) + CDP(in). Mediates the transport of CDP-ribitol. Does not exhibit CMP-sialic acid, UDP-galactose and UDP-N-acetylglucosamine transport activity. In Sus scrofa (Pig), this protein is Probable UDP-sugar transporter protein SLC35A4.